Reading from the N-terminus, the 629-residue chain is Serine/threonine-protein kinase ICK (629 aa).

In terms of domain architecture, Protein kinase spans 4 to 284 (YTTIKQLGDG…ASQALRYPYF (281 aa)). Residues 10–18 (LGDGTYGSV) and lysine 33 each bind ATP. Catalysis depends on aspartate 125, which acts as the Proton acceptor. Threonine 157 is subject to Phosphothreonine; by CDK7. Position 159 is a phosphotyrosine (tyrosine 159). Serine 161 carries the post-translational modification Phosphoserine. 3 disordered regions span residues 292-376 (IISK…SLHN), 455-483 (SESVGTGTTVSTQASSQRRDTPTLQSSAK), and 581-629 (SSLK…PSRR). A compositionally biased stretch (basic and acidic residues) spans 296–306 (DSGKPQREVQD). Positions 309 to 321 (GPPPYIKPAPPAQ) are enriched in pro residues. 2 stretches are compositionally biased toward low complexity: residues 322 to 344 (APAKAYTLISSRPSQASQPPQHS) and 457 to 470 (SVGTGTTVSTQASS).

Belongs to the protein kinase superfamily. CMGC Ser/Thr protein kinase family. CDC2/CDKX subfamily. Mg(2+) serves as cofactor. In terms of processing, autophosphorylated on serine and threonine residues. Phosphorylation at Thr-157 by CDK7/Cak1p increases kinase activity. Highly expressed in colon and lung, lower levels present in heart, esophagus, stomach, small intestine and ovary. Localizes to the crypt region of large and small intestine.

It is found in the cytoplasm. Its subcellular location is the cytosol. The protein resides in the cell projection. The protein localises to the cilium. It localises to the nucleus. It is found in the cytoskeleton. Its subcellular location is the cilium basal body. It carries out the reaction L-seryl-[protein] + ATP = O-phospho-L-seryl-[protein] + ADP + H(+). The catalysed reaction is L-threonyl-[protein] + ATP = O-phospho-L-threonyl-[protein] + ADP + H(+). Functionally, has an essential role in ciliogenesis, particularly in neuronal and retinal progenitor cells. Phosphorylates KIF3A. Involved in the control of ciliary length. Regulates the ciliary localization of SHH pathway components as well as the localization of IFT components at ciliary tips. May play a role in cardiac development. Regulates intraflagellar transport (IFT) speed and negatively regulates cilium length in a cAMP and mTORC1 signaling -dependent manner and this regulation requires its kinase activity. The polypeptide is Serine/threonine-protein kinase ICK (Cilk1) (Mus musculus (Mouse)).